We begin with the raw amino-acid sequence, 890 residues long: Alanine--tRNA ligase (890 aa).

Positions 565, 569, 677, and 681 each coordinate Zn(2+).

It belongs to the class-II aminoacyl-tRNA synthetase family. Requires Zn(2+) as cofactor.

The protein resides in the cytoplasm. It carries out the reaction tRNA(Ala) + L-alanine + ATP = L-alanyl-tRNA(Ala) + AMP + diphosphate. Functionally, catalyzes the attachment of alanine to tRNA(Ala) in a two-step reaction: alanine is first activated by ATP to form Ala-AMP and then transferred to the acceptor end of tRNA(Ala). Also edits incorrectly charged Ser-tRNA(Ala) and Gly-tRNA(Ala) via its editing domain. This is Alanine--tRNA ligase from Zymomonas mobilis subsp. mobilis (strain ATCC 31821 / ZM4 / CP4).